Reading from the N-terminus, the 248-residue chain is 1-(5-phosphoribosyl)-5-[(5-phosphoribosylamino)methylideneamino] imidazole-4-carboxamide isomerase (248 aa).

Asp-8 (proton acceptor) is an active-site residue. The active-site Proton donor is Asp-130.

It belongs to the HisA/HisF family.

Its subcellular location is the cytoplasm. The catalysed reaction is 1-(5-phospho-beta-D-ribosyl)-5-[(5-phospho-beta-D-ribosylamino)methylideneamino]imidazole-4-carboxamide = 5-[(5-phospho-1-deoxy-D-ribulos-1-ylimino)methylamino]-1-(5-phospho-beta-D-ribosyl)imidazole-4-carboxamide. It functions in the pathway amino-acid biosynthesis; L-histidine biosynthesis; L-histidine from 5-phospho-alpha-D-ribose 1-diphosphate: step 4/9. The sequence is that of 1-(5-phosphoribosyl)-5-[(5-phosphoribosylamino)methylideneamino] imidazole-4-carboxamide isomerase from Alkalilimnicola ehrlichii (strain ATCC BAA-1101 / DSM 17681 / MLHE-1).